An 833-amino-acid chain; its full sequence is Translation initiation factor IF-2 (833 aa).

A disordered region spans residues 1–247 (MTEDVKKADG…ALQQAFTKPA (247 aa)). Composition is skewed to basic and acidic residues over residues 53–99 (QKAE…EAKK) and 110–152 (VDVE…RYAE). Acidic residues predominate over residues 153–166 (LSEEDAENENSEDY). Residues 187–203 (KENRNRGGKNKVAKAKK) show a composition bias toward basic residues. Positions 204–227 (GGREDESSKTERESNRRNQKDGKM) are enriched in basic and acidic residues. One can recognise a tr-type G domain in the interval 333 to 502 (TRAPVVTIMG…LLQSEVLELT (170 aa)). Positions 342–349 (GHVDHGKT) are G1. Residue 342-349 (GHVDHGKT) coordinates GTP. The G2 stretch occupies residues 367 to 371 (GITQH). Residues 388-391 (DTPG) are G3. Residues 388 to 392 (DTPGH) and 442 to 445 (NKID) contribute to the GTP site. A G4 region spans residues 442 to 445 (NKID). The tract at residues 478–480 (SAK) is G5.

Belongs to the TRAFAC class translation factor GTPase superfamily. Classic translation factor GTPase family. IF-2 subfamily.

It is found in the cytoplasm. In terms of biological role, one of the essential components for the initiation of protein synthesis. Protects formylmethionyl-tRNA from spontaneous hydrolysis and promotes its binding to the 30S ribosomal subunits. Also involved in the hydrolysis of GTP during the formation of the 70S ribosomal complex. The polypeptide is Translation initiation factor IF-2 (infB) (Pasteurella multocida (strain Pm70)).